The sequence spans 539 residues: Chaperonin GroEL (539 aa).

ATP-binding positions include 29 to 32, 86 to 90, Gly414, and Asp493; these read TIGP and DGTTT.

This sequence belongs to the chaperonin (HSP60) family. As to quaternary structure, forms a cylinder of 14 subunits composed of two heptameric rings stacked back-to-back. Interacts with the co-chaperonin GroES.

The protein localises to the cytoplasm. It catalyses the reaction ATP + H2O + a folded polypeptide = ADP + phosphate + an unfolded polypeptide.. Together with its co-chaperonin GroES, plays an essential role in assisting protein folding. The GroEL-GroES system forms a nano-cage that allows encapsulation of the non-native substrate proteins and provides a physical environment optimized to promote and accelerate protein folding. This is Chaperonin GroEL from Staphylococcus aureus.